We begin with the raw amino-acid sequence, 256 residues long: Biosynthetic peptidoglycan transglycosylase (256 aa).

A helical membrane pass occupies residues 26–48; the sequence is VARWLAYVGGVFAGAWLATQLYY.

Belongs to the glycosyltransferase 51 family.

The protein localises to the cell inner membrane. The catalysed reaction is [GlcNAc-(1-&gt;4)-Mur2Ac(oyl-L-Ala-gamma-D-Glu-L-Lys-D-Ala-D-Ala)](n)-di-trans,octa-cis-undecaprenyl diphosphate + beta-D-GlcNAc-(1-&gt;4)-Mur2Ac(oyl-L-Ala-gamma-D-Glu-L-Lys-D-Ala-D-Ala)-di-trans,octa-cis-undecaprenyl diphosphate = [GlcNAc-(1-&gt;4)-Mur2Ac(oyl-L-Ala-gamma-D-Glu-L-Lys-D-Ala-D-Ala)](n+1)-di-trans,octa-cis-undecaprenyl diphosphate + di-trans,octa-cis-undecaprenyl diphosphate + H(+). The protein operates within cell wall biogenesis; peptidoglycan biosynthesis. Peptidoglycan polymerase that catalyzes glycan chain elongation from lipid-linked precursors. In Burkholderia pseudomallei (strain K96243), this protein is Biosynthetic peptidoglycan transglycosylase.